The chain runs to 358 residues: Trace amine-associated receptor 7d (358 aa).

At 1–47 (MATGDDSFPWDQDSILSRDLFSATSTELCYENLNRSCVRSPYSPGPR) the chain is on the extracellular side. N-linked (GlcNAc...) asparagine glycosylation occurs at asparagine 34. Cystine bridges form between cysteine 37–cysteine 201 and cysteine 120–cysteine 205. Residues 48 to 68 (LILYAVFGFGAVLAVCGNLLV) form a helical membrane-spanning segment. Topologically, residues 69–83 (MTSILHFRQLHSPAN) are cytoplasmic. The helical transmembrane segment at 84-104 (FLVASLACADFLVGVMVMPFS) threads the bilayer. At 105-121 (MVRSVEGCWYFGESYCK) the chain is on the extracellular side. Residues 122–143 (FHSCFEGSFCYSSLFHLCFISV) form a helical membrane-spanning segment. The Cytoplasmic portion of the chain corresponds to 144–166 (DRYIAVSDPLTYPTRFTASVSGK). Residues 167–187 (CITFSWLLSIIYSFSLLYTGA) traverse the membrane as a helical segment. At 188–212 (NDAGLEDLVSALTCVGGCQIAVNQT) the chain is on the extracellular side. Residue asparagine 210 is glycosylated (N-linked (GlcNAc...) asparagine). A helical transmembrane segment spans residues 213 to 233 (WVFINFLLFLIPTLVMITVYS). Residues 234-274 (KIFLIAKQQAQNIEKMSKQTARASESYKDRVTKRERKAAKT) lie on the Cytoplasmic side of the membrane. The helical transmembrane segment at 275–295 (LGIAVAAFLLSWLPYFIDSII) threads the bilayer. Residues 296–309 (DAFLGFITPTYVYE) lie on the Extracellular side of the membrane. Residues 310 to 333 (ILVWIVYYNSAMNPLIYAFFYSWF) traverse the membrane as a helical segment. At 334-358 (RKAIKLIVSGKILRENSSTTNLFPE) the chain is on the cytoplasmic side.

Belongs to the G-protein coupled receptor 1 family. In terms of tissue distribution, specifically expressed in neurons of the olfactory epithelium.

The protein resides in the cell membrane. In terms of biological role, olfactory receptor specific for trace amines, such as beta-phenylethylamine (beta-PEA). Trace amine compounds are enriched in animal body fluids and act on trace amine-associated receptors (TAARs) to elicit both intraspecific and interspecific innate behaviors. Ligand-binding causes a conformation change that triggers signaling via G(s)-class of G alpha proteins (GNAL or GNAS). In Mus musculus (Mouse), this protein is Trace amine-associated receptor 7d.